A 353-amino-acid chain; its full sequence is Uroporphyrinogen decarboxylase (353 aa).

Substrate contacts are provided by residues 27–31, phenylalanine 46, aspartate 76, tyrosine 152, serine 207, and histidine 321; that span reads RQAGR.

The protein belongs to the uroporphyrinogen decarboxylase family. Homodimer.

The protein resides in the cytoplasm. It catalyses the reaction uroporphyrinogen III + 4 H(+) = coproporphyrinogen III + 4 CO2. Its pathway is porphyrin-containing compound metabolism; protoporphyrin-IX biosynthesis; coproporphyrinogen-III from 5-aminolevulinate: step 4/4. In terms of biological role, catalyzes the decarboxylation of four acetate groups of uroporphyrinogen-III to yield coproporphyrinogen-III. In Listeria monocytogenes serovar 1/2a (strain ATCC BAA-679 / EGD-e), this protein is Uroporphyrinogen decarboxylase.